A 312-amino-acid polypeptide reads, in one-letter code: Serine/threonine-protein phosphatase PP1 isozyme 2 (312 aa).

A2 is subject to N-acetylalanine. D70, H72, D98, and N130 together coordinate Mn(2+). Residue H131 is the Proton donor of the active site. Positions 179 and 254 each coordinate Mn(2+).

The protein belongs to the PPP phosphatase family. PP-1 subfamily. Interacts with SRK2D/SNRK2.2 and SRK2E/SNRK2.6. It depends on Mn(2+) as a cofactor.

The protein resides in the nucleus. It is found in the cytoplasm. It carries out the reaction O-phospho-L-seryl-[protein] + H2O = L-seryl-[protein] + phosphate. The enzyme catalyses O-phospho-L-threonyl-[protein] + H2O = L-threonyl-[protein] + phosphate. Phosphatase activity is strongly reduced by the protein phosphatase inhibitor 2 (I-2). In terms of biological role, serine/threonine-protein phosphatase that possesses phosphatase activity toward para-nitrophenyl phosphate (pNPP) in vitro. The polypeptide is Serine/threonine-protein phosphatase PP1 isozyme 2 (Arabidopsis thaliana (Mouse-ear cress)).